The following is a 627-amino-acid chain: MAKTEQRFDYVKIGLASPERIMEWGQRTLPNGQVVGEVTKPETINYRTLKPEMDGLFCERIFGPAKDWECHCGKYKRVRHRGIVCERCGVEVTESRVRRHRMGYIKLAAPVTHVWYLKGIPSHIATLLDMPLRDVEQVVYFNAYVVVDPGNAQNLSYKQLLTEDQFLEIEDQMYEEGSELQLPENWAMIGAEAIERLLKDIDLEKEAEQLREEITSARGQKRARLIKRLRVIDNFIATGSRPEWMVLRVLPVIPPDLRPMVQLDGGRFATSDLNDLYRRVINRNNRLARLQEIMAPEIIVRNEKRMLQEAVDALIDNGRRGRVVAGANNRPLKSLSDIIEGKQGRFRQNLLGKRVDYSGRSVIVVGPNLRMHQCGLPKEMAIELFQPFVIHKLIKRGIVNNIKAAKKMIQSNDPQIWDVLEEVIDGHPVLLNRAPTLHRLGIQAFEPILVEGRAIQLHPLVCPAFNADFDGDQMAVHVPLSLEAQAEARLLMLATNNILSPATGAPIITPSQDMVLGCYYLTADNPHAPDIGDRFFASLEDALIAYDRGAIGLHSKVWVRYHGPMELGKGEKESEPQIIEEAGGIRLKITNYRRIREDQNGNVISQYIRTTPGRIIFNKTVQDILSA.

Zn(2+) contacts are provided by Cys70, Cys72, Cys85, and Cys88. Positions 468, 470, and 472 each coordinate Mg(2+).

Belongs to the RNA polymerase beta' chain family. RpoC1 subfamily. In cyanobacteria the RNAP catalytic core is composed of 2 alpha, 1 beta, 1 beta', 1 gamma and 1 omega subunit. When a sigma factor is associated with the core the holoenzyme is formed, which can initiate transcription. The cofactor is Mg(2+). Zn(2+) serves as cofactor.

It carries out the reaction RNA(n) + a ribonucleoside 5'-triphosphate = RNA(n+1) + diphosphate. In terms of biological role, DNA-dependent RNA polymerase catalyzes the transcription of DNA into RNA using the four ribonucleoside triphosphates as substrates. This chain is DNA-directed RNA polymerase subunit gamma, found in Synechococcus sp. (strain JA-2-3B'a(2-13)) (Cyanobacteria bacterium Yellowstone B-Prime).